The primary structure comprises 456 residues: G-protein coupled receptor 39 (456 aa).

Over 1-34 (MASSSGSNHICSRVIDHSHVPEFEVATWIKITLI) the chain is Extracellular. 2 disulfide bridges follow: Cys-11–Cys-191 and Cys-108–Cys-210. The Zn(2+) site is built by His-17 and His-19. A helical membrane pass occupies residues 35 to 55 (LVYLIIFVVGILGNSVTIRVT). Residues 56–69 (QVLQKKGYLQKEVT) lie on the Cytoplasmic side of the membrane. A helical membrane pass occupies residues 70 to 89 (DHMVSLACSDILVFLIGMPM). Residues 90 to 109 (EFYSIIWNPLTTPSYALSCK) are Extracellular-facing. The chain crosses the membrane as a helical span at residues 110 to 131 (LHTFLFETCSYATLLHVLTLSF). Topologically, residues 132 to 151 (ERYIAICHPFKYKAVSGPRQ) are cytoplasmic. The chain crosses the membrane as a helical span at residues 152–172 (VKLLIGFVWVTSALVALPLLF). The Extracellular segment spans residues 173-217 (AMGIEYPLVNVPTHKGLNCNLSRTRHHDEPGNSNMSICTNLSNRW). N-linked (GlcNAc...) asparagine glycans are attached at residues Asn-192 and Asn-206. A helical membrane pass occupies residues 218–242 (EVFQSSIFGAFAVYLVVLASVAFMC). Over 243-283 (WNMMKVLMKSKQGTLAGTGPQLQLRKSESEESRTARRQTII) the chain is Cytoplasmic. A helical membrane pass occupies residues 284-305 (FLRLIVVTLAVCWMPNQIRRIM). Over 306-323 (AAAKPKHDWTRTYFRAYM) the chain is Extracellular. Residues 324–344 (ILLPFSDTFFYLSSVVNPLLY) form a helical membrane-spanning segment. Residues 345–456 (NVSSQQFRKV…TENSLQEQEV (112 aa)) are Cytoplasmic-facing. Position 397 is a phosphoserine (Ser-397). The tract at residues 415–456 (FQTEAKPGEAKPQPLSPESPQTGSETKPAGSTTENSLQEQEV) is disordered. The segment covering 430–456 (SPESPQTGSETKPAGSTTENSLQEQEV) has biased composition (polar residues).

It belongs to the G-protein coupled receptor 1 family. As to quaternary structure, interacts with HTR1A. Interacts with GALR1. As to expression, expression is detected in septumamygdala, parietal cells, enterocytes, neurons and pancreas, in peripheral organs such as the duodenum and kidney but not in the pituitary and hypothalamus.

The protein localises to the cell membrane. Zinc-sensing receptor that can sense changes in extracellular Zn(2+), mediate Zn(2+) signal transmission, and participates in the regulation of numerous physiological processes including glucose homeostasis regulation, gastrointestinal mobility, hormone secretion and cell death. Activation by Zn(2+) in keratinocytes increases the intracellular concentration of Ca(2+) and activates the ERK/MAPK and PI3K/AKT signaling pathways leading to epithelial repair. Plays an essential role in normal wound healing by inducing the production of cytokines including the major inflammatory cytokine IL6 via the PKC/MAPK/CEBPB pathway. Regulates adipose tissue metabolism, especially lipolysis, and regulates the function of lipases, such as hormone-sensitive lipase and adipose triglyceride lipase. Plays a role in the inhibition of cell death and protects against oxidative, endoplasmic reticulum and mitochondrial stress by inducing secretion of the cytoprotective pigment epithelium-derived growth factor (PEDF) and probably other protective transcripts in a GNA13/RHOA/SRE-dependent manner. Forms dynamic heteroreceptor complexes with HTR1A and GALR1 depending on cell type or specific physiological states, resulting in signaling diversity: HTR1A-GPR39 shows additive increase in signaling along the serum response element (SRE) and NF-kappa-B pathways while GALR1 acts as an antagonist blocking SRE. The protein is G-protein coupled receptor 39 (Gpr39) of Mus musculus (Mouse).